The following is a 159-amino-acid chain: Bacterial non-heme ferritin (159 aa).

The 145-residue stretch at 1–145 (MISEKLQNAI…GIVDKIKRAG (145 aa)) folds into the Ferritin-like diiron domain. The Fe cation site is built by Glu-17, Glu-50, His-53, Glu-94, and Gln-127.

The protein belongs to the ferritin family. Prokaryotic subfamily. Homooligomer of 24 subunits that assemble into a spherical protein shell (12 +/- 1 nM diameter) that can sequester at least 2000 iron atoms.

The catalysed reaction is 4 Fe(2+) + O2 + 6 H2O = 4 iron(III) oxide-hydroxide + 12 H(+). Its function is as follows. May alleviate iron toxicity in the presence of oxygen. The protein is Bacterial non-heme ferritin (ftnA) of Bacteroides fragilis (strain 638R).